The primary structure comprises 222 residues: Peptide methionine sulfoxide reductase MsrA (222 aa).

The active site involves cysteine 60.

This sequence belongs to the MsrA Met sulfoxide reductase family.

The catalysed reaction is L-methionyl-[protein] + [thioredoxin]-disulfide + H2O = L-methionyl-(S)-S-oxide-[protein] + [thioredoxin]-dithiol. It carries out the reaction [thioredoxin]-disulfide + L-methionine + H2O = L-methionine (S)-S-oxide + [thioredoxin]-dithiol. In terms of biological role, has an important function as a repair enzyme for proteins that have been inactivated by oxidation. Catalyzes the reversible oxidation-reduction of methionine sulfoxide in proteins to methionine. This is Peptide methionine sulfoxide reductase MsrA from Pseudomonas putida (strain W619).